Consider the following 138-residue polypeptide: Calmodulin-beta (138 aa).

EF-hand domains are found at residues 1–32 (EFKE…LGQN), 33–68 (PTEA…KMKE), 70–105 (DSEE…LGEK), and 106–138 (LTDE…MTSK). Asp10, Asp12, Asp14, Thr16, Glu21, Asp46, Asp48, Asn50, Thr52, Glu57, Asp83, Asp85, Asn87, Glu94, Asp119, Asp121, Asp123, Gln125, and Glu130 together coordinate Ca(2+).

It belongs to the calmodulin family.

In terms of biological role, calmodulin mediates the control of a large number of enzymes, ion channels and other proteins by Ca(2+). Among the enzymes to be stimulated by the calmodulin-Ca(2+) complex are a number of protein kinases and phosphatases. This chain is Calmodulin-beta, found in Arbacia punctulata (Punctuate sea urchin).